A 164-amino-acid chain; its full sequence is 5-formyltetrahydrofolate cyclo-ligase (164 aa).

ATP is bound at residue 3-7; that stretch reads KNALR. Residues E50 and E55 each contribute to the substrate site. 115–123 contributes to the ATP binding site; it reads RLGFGKGYY. D124 contacts Mg(2+). Residues R125 and W153 each contribute to the ATP site. D154 lines the Mg(2+) pocket.

This sequence belongs to the 5-formyltetrahydrofolate cyclo-ligase family. Monomer or homodimer. It depends on Mg(2+) as a cofactor. The cofactor is Mn(2+). Ca(2+) serves as cofactor. Requires Zn(2+) as cofactor. Fe(2+) is required as a cofactor. It depends on Co(2+) as a cofactor. The cofactor is Cu(2+).

Its subcellular location is the cytoplasm. The catalysed reaction is (6S)-5-formyl-5,6,7,8-tetrahydrofolate + ATP = (6R)-5,10-methenyltetrahydrofolate + ADP + phosphate. Functionally, involved in folate metabolism. Catalyzes the irreversible conversion of 5-formyltetrahydrofolate (5-FTHF) to yield 5,10-methenyltetrahydrofolate. This chain is 5-formyltetrahydrofolate cyclo-ligase, found in Mycoplasma pneumoniae (strain ATCC 29342 / M129 / Subtype 1) (Mycoplasmoides pneumoniae).